The primary structure comprises 644 residues: Exoribonuclease 2 (644 aa).

Positions 189 to 516 (RQDLTALNFV…NHRLLKAVIK (328 aa)) constitute an RNB domain. The S1 motif domain maps to 561–643 (NTRFAAEIID…ETRSIIARPA (83 aa)).

This sequence belongs to the RNR ribonuclease family. RNase II subfamily.

The protein localises to the cytoplasm. It catalyses the reaction Exonucleolytic cleavage in the 3'- to 5'-direction to yield nucleoside 5'-phosphates.. Its function is as follows. Involved in mRNA degradation. Hydrolyzes single-stranded polyribonucleotides processively in the 3' to 5' direction. In Salmonella gallinarum (strain 287/91 / NCTC 13346), this protein is Exoribonuclease 2.